Reading from the N-terminus, the 114-residue chain is Large ribosomal subunit protein bL17 (114 aa).

The protein belongs to the bacterial ribosomal protein bL17 family. As to quaternary structure, part of the 50S ribosomal subunit. Contacts protein L32.

This is Large ribosomal subunit protein bL17 from Clostridium acetobutylicum (strain ATCC 824 / DSM 792 / JCM 1419 / IAM 19013 / LMG 5710 / NBRC 13948 / NRRL B-527 / VKM B-1787 / 2291 / W).